Consider the following 483-residue polypeptide: Xylulose kinase (483 aa).

79–80 contacts substrate; that stretch reads MH.

It belongs to the FGGY kinase family.

The catalysed reaction is D-xylulose + ATP = D-xylulose 5-phosphate + ADP + H(+). Catalyzes the phosphorylation of D-xylulose to D-xylulose 5-phosphate. This chain is Xylulose kinase, found in Staphylococcus xylosus.